The primary structure comprises 136 residues: Heme-binding protein Rv0203 (136 aa).

The N-terminal stretch at 1 to 27 is a signal peptide; it reads MKTGTATTRRRLLAVLIALALPGAAVA. Cysteine 41 and cysteine 115 are disulfide-bonded. Positions 60, 64, and 90 each coordinate heme.

Dimer of dimers.

It localises to the secreted. In terms of biological role, part of a heme-iron acquisition system. Acts by binding heme and delivering it to the membrane proteins MmpL3 and MmpL11. Can use free heme or heme from host hemoglobin. The protein is Heme-binding protein Rv0203 of Mycobacterium tuberculosis (strain ATCC 25618 / H37Rv).